Reading from the N-terminus, the 766-residue chain is Oligopeptide transporter 7 (766 aa).

The interval M1 to R58 is disordered. Positions D45–N54 are enriched in acidic residues. 15 helical membrane passes run M79–Y99, L104–A124, I154–V174, F184–I204, F247–I267, I287–S307, V324–V344, L390–M410, V446–C466, W477–I497, I509–F529, F561–W581, L627–L647, A676–F696, and V709–L729.

Belongs to the oligopeptide OPT transporter (TC 2.A.67.1) family. Expressed in the major and the first-order veins and in the hydathodes of the leaves. In the roots, expressed in circular zones surrounding lateral root primordia and in some part of the root epidermis. Expressed also in the sepals and the cortical tissues of the stem, but not in the conducting bundles, the petals or the reproductive tissues.

It localises to the membrane. Functionally, involved in the translocation of tetra- and pentapeptides across the cellular membrane in an energy-dependent manner. May also transport cadmium complexes. The protein is Oligopeptide transporter 7 (OPT7) of Arabidopsis thaliana (Mouse-ear cress).